The primary structure comprises 227 residues: Probable septum site-determining protein MinC (227 aa).

Belongs to the MinC family. As to quaternary structure, interacts with MinD and FtsZ.

In terms of biological role, cell division inhibitor that blocks the formation of polar Z ring septums. Rapidly oscillates between the poles of the cell to destabilize FtsZ filaments that have formed before they mature into polar Z rings. Prevents FtsZ polymerization. The polypeptide is Probable septum site-determining protein MinC (Laribacter hongkongensis (strain HLHK9)).